Consider the following 119-residue polypeptide: Large ribosomal subunit protein bL20 (119 aa).

This sequence belongs to the bacterial ribosomal protein bL20 family.

Its function is as follows. Binds directly to 23S ribosomal RNA and is necessary for the in vitro assembly process of the 50S ribosomal subunit. It is not involved in the protein synthesizing functions of that subunit. This chain is Large ribosomal subunit protein bL20, found in Stenotrophomonas maltophilia (strain R551-3).